The following is a 134-amino-acid chain: Small ribosomal subunit protein uS11 (134 aa).

The disordered stretch occupies residues 115-134; sequence TPIPHNGTRPPKKVLKRDLK. Positions 124–134 are enriched in basic residues; the sequence is PPKKVLKRDLK.

Belongs to the universal ribosomal protein uS11 family. In terms of assembly, part of the 30S ribosomal subunit. Interacts with proteins S7 and S18. Binds to IF-3.

In terms of biological role, located on the platform of the 30S subunit, it bridges several disparate RNA helices of the 16S rRNA. Forms part of the Shine-Dalgarno cleft in the 70S ribosome. This is Small ribosomal subunit protein uS11 from Mycoplasma mobile (strain ATCC 43663 / 163K / NCTC 11711) (Mesomycoplasma mobile).